Reading from the N-terminus, the 634-residue chain is Ras and EF-hand domain-containing protein homolog (634 aa).

EF-hand domains are found at residues 5 to 33 (EVEN…CPQL) and 33 to 68 (LDDN…TVQH). Ca(2+) is bound by residues Asp-46, Asp-48, Ser-50, Lys-52, and Glu-57. A coiled-coil region spans residues 169–310 (LSEKKHENER…RCEFDQKQDE (142 aa)). A disordered region spans residues 212–234 (ARQEERDRLTKEKEEMRQRMSDE). GTP-binding positions include 449–454 (AVGKSS), 552–555 (NKVD), and 585–586 (AL). Residues 632-634 (RGS) constitute a propeptide, removed in mature form.

This sequence belongs to the small GTPase superfamily. Rab family. In terms of assembly, homodimer.

It is found in the cytoplasm. It localises to the perinuclear region. Binds GTP and GDP. Plays a role in uterine seam cell development. This is Ras and EF-hand domain-containing protein homolog from Caenorhabditis elegans.